The following is a 421-amino-acid chain: Mannose-1-phosphate guanyltransferase alpha-A (421 aa).

Belongs to the transferase hexapeptide repeat family.

It carries out the reaction alpha-D-mannose 1-phosphate + GTP + H(+) = GDP-alpha-D-mannose + diphosphate. It participates in nucleotide-sugar biosynthesis; GDP-alpha-D-mannose biosynthesis; GDP-alpha-D-mannose from alpha-D-mannose 1-phosphate (GTP route): step 1/1. This is Mannose-1-phosphate guanyltransferase alpha-A (gmppa-a) from Xenopus laevis (African clawed frog).